The sequence spans 423 residues: Galactosylceramide sulfotransferase (423 aa).

Residues 1 to 12 (MTLLPKKPCKSK) are Cytoplasmic-facing. Residues 13 to 35 (AKGLLLGALFTSFLLLLYSYVVP) form a helical; Signal-anchor for type II membrane protein membrane-spanning segment. The Lumenal portion of the chain corresponds to 36 to 423 (PLYPNMAFTT…WKFLRDFLRW (388 aa)). N-linked (GlcNAc...) asparagine glycosylation is found at Asn66 and Asn312.

It belongs to the galactose-3-O-sulfotransferase family. As to expression, expressed in brain, testis, kidney, stomach, small intestine, liver, and lung. Not detected in heart, skeletal muscle, and spleen.

It is found in the golgi apparatus membrane. It catalyses the reaction a beta-D-galactosyl-(1&lt;-&gt;1')-N-acylsphing-4-enine + 3'-phosphoadenylyl sulfate = an N-acyl-1-beta-D-(3-O-sulfo)-galactosyl-sphing-4-enine + adenosine 3',5'-bisphosphate + H(+). It carries out the reaction a 1-O-alkyl-2-acyl-3-O-(beta-D-galactosyl)-sn-glycerol + 3'-phosphoadenylyl sulfate = a 1-O-alkyl-2-acyl-3-(beta-D-3-sulfogalactosyl)-sn-glycerol + adenosine 3',5'-bisphosphate + H(+). The enzyme catalyses a beta-D-Gal-(1&lt;-&gt;1')-ceramide + 3'-phosphoadenylyl sulfate = 1-(3-O-sulfo-beta-D-galactosyl)-ceramide + adenosine 3',5'-bisphosphate + H(+). The catalysed reaction is a 1,2-diacyl-3-O-(beta-D-galactosyl)-sn-glycerol + 3'-phosphoadenylyl sulfate = 1,2-diacyl-3-(3-O-sulfo-beta-D-galactosyl)-sn-glycerol + adenosine 3',5'-bisphosphate + H(+). It catalyses the reaction a beta-D-Gal-(1-&gt;4)-beta-D-Glc-(1&lt;-&gt;1)-Cer(d18:1(4E)) + 3'-phosphoadenylyl sulfate = beta-D-3-sulfogalactosyl-(1-&gt;4)-beta-D-glucosyl-(1&lt;-&gt;1')-N-acylsphing-4-enine + adenosine 3',5'-bisphosphate + H(+). Its pathway is lipid metabolism; sphingolipid metabolism. Its function is as follows. Catalyzes the transfer of a sulfate group to position 3 of non-reducing beta-galactosyl residues in glycerolipids and sphingolipids, therefore participates in the biosynthesis of sulfoglycolipids. Catalyzes the synthesis of galactosylceramide sulfate (sulfatide), a major lipid component of the myelin sheath and of monogalactosylalkylacylglycerol sulfate (seminolipid), present in spermatocytes. Seems to prefer beta-glycosides at the non-reducing termini of sugar chains attached to a lipid moiety. Also acts on lactosylceramide, galactosyl 1-alkyl-2-sn-glycerol and galactosyl diacylglycerol (in vitro). The protein is Galactosylceramide sulfotransferase of Mus musculus (Mouse).